A 210-amino-acid chain; its full sequence is Holliday junction resolvase RecU (210 aa).

The interval 1–34 is disordered; it reads MAFHYPNGQPYSNHETKQPKKQGRHTSPTTLYGK. Mg(2+) contacts are provided by Thr-90, Asp-92, Glu-105, and Gln-124.

The protein belongs to the RecU family. Mg(2+) is required as a cofactor.

It localises to the cytoplasm. It catalyses the reaction Endonucleolytic cleavage at a junction such as a reciprocal single-stranded crossover between two homologous DNA duplexes (Holliday junction).. Functionally, endonuclease that resolves Holliday junction intermediates in genetic recombination. Cleaves mobile four-strand junctions by introducing symmetrical nicks in paired strands. Promotes annealing of linear ssDNA with homologous dsDNA. Required for DNA repair, homologous recombination and chromosome segregation. The polypeptide is Holliday junction resolvase RecU (Latilactobacillus sakei subsp. sakei (strain 23K) (Lactobacillus sakei subsp. sakei)).